The chain runs to 365 residues: Class I histocompatibility antigen, Gogo-A*0101 alpha chain (365 aa).

Residues 1–24 form the signal peptide; the sequence is MAVMAPRTLVLLLSGALALTQTWA. Positions 25 to 114 are alpha-1; the sequence is GSHSMRYFST…LRGYYNQSED (90 aa). The Extracellular segment spans residues 25 to 308; the sequence is GSHSMRYFST…EPSSQPTIPI (284 aa). An N-linked (GlcNAc...) asparagine glycan is attached at asparagine 110. The alpha-2 stretch occupies residues 115 to 206; that stretch reads GSHTIQRMYG…ENGKETLQRT (92 aa). 2 cysteine pairs are disulfide-bonded: cysteine 125/cysteine 188 and cysteine 227/cysteine 283. The interval 207-298 is alpha-3; it reads DAPKTHMTHH…GLPEPLTLRW (92 aa). In terms of domain architecture, Ig-like C1-type spans 209-297; the sequence is PKTHMTHHAV…EGLPEPLTLR (89 aa). The segment at 299-308 is connecting peptide; it reads EPSSQPTIPI. The chain crosses the membrane as a helical span at residues 309–332; the sequence is VGIIAGLVLFGAVIAGAVVAAVRW. Residues 333 to 365 lie on the Cytoplasmic side of the membrane; it reads RRKSSDRKGGSYSQAASSDSAQGSDVSLTACKV. The interval 338-365 is disordered; sequence DRKGGSYSQAASSDSAQGSDVSLTACKV. The segment covering 342-359 has biased composition (low complexity); it reads GSYSQAASSDSAQGSDVS. Serine 343 carries the post-translational modification Phosphoserine. The residue at position 344 (tyrosine 344) is a Phosphotyrosine. Phosphoserine is present on residues serine 345, serine 349, serine 350, serine 352, serine 356, and serine 359.

Belongs to the MHC class I family. In terms of assembly, heterodimer of an alpha chain and a beta chain (beta-2-microglobulin).

The protein resides in the membrane. In terms of biological role, involved in the presentation of foreign antigens to the immune system. The protein is Class I histocompatibility antigen, Gogo-A*0101 alpha chain of Gorilla gorilla gorilla (Western lowland gorilla).